Reading from the N-terminus, the 202-residue chain is Molybdenum cofactor guanylyltransferase (202 aa).

GTP is bound by residues 9–11 (LAG), Lys22, Asp70, and Asp96. A Mg(2+)-binding site is contributed by Asp96.

It belongs to the MobA family. Monomer. Requires Mg(2+) as cofactor.

Its subcellular location is the cytoplasm. It carries out the reaction Mo-molybdopterin + GTP + H(+) = Mo-molybdopterin guanine dinucleotide + diphosphate. In terms of biological role, transfers a GMP moiety from GTP to Mo-molybdopterin (Mo-MPT) cofactor (Moco or molybdenum cofactor) to form Mo-molybdopterin guanine dinucleotide (Mo-MGD) cofactor. The polypeptide is Molybdenum cofactor guanylyltransferase (Desulfosudis oleivorans (strain DSM 6200 / JCM 39069 / Hxd3) (Desulfococcus oleovorans)).